A 156-amino-acid polypeptide reads, in one-letter code: Small ribosomal subunit protein uS7 (156 aa).

Belongs to the universal ribosomal protein uS7 family. In terms of assembly, part of the 30S ribosomal subunit. Contacts proteins S9 and S11.

Functionally, one of the primary rRNA binding proteins, it binds directly to 16S rRNA where it nucleates assembly of the head domain of the 30S subunit. Is located at the subunit interface close to the decoding center, probably blocks exit of the E-site tRNA. The protein is Small ribosomal subunit protein uS7 of Dictyoglomus turgidum (strain DSM 6724 / Z-1310).